Here is a 442-residue protein sequence, read N- to C-terminus: MFYDQARIFVKGGDGGNGIVSFRREKYVPEGGPNGGDGGDGGNVIFIGDEGLRTLVDFRYQRHYKAERGEHGMGKNMHGRNGQDMTVRVPIGTVVKDAETGKILVDITCDGQQYIAARGGRGGRGNAKFVSSTNRVPLIAEKGEPGEEHWLELELKLLADVGLVGFPNVGKSTLIASVSAARPKIANYHFTTLEPNLGVVRIAEGQSFVMADIPGLIEGAHTGAGLGHDFLRHTERTRYLIHVLDISGSEGRDPLEDYDAINRELALYKPELADKPMVIAANKMDLPGAEENLARLREKLGEGAVIFPISAATRQGLEPLIYHVHKGLEELGPVVFERVTADAHMDVRFTGKTEERFKIHRDEQGVFVVTGKEVERHVAMTDMENEESVARLQRIFDVMGVDQALRDAGCQHGDPVRIGDLDFDFIEYAAQYAERDDDGENG.

Residues 1–158 enclose the Obg domain; the sequence is MFYDQARIFV…HWLELELKLL (158 aa). One can recognise an OBG-type G domain in the interval 159–329; it reads ADVGLVGFPN…LIYHVHKGLE (171 aa). Residues 165–172, 190–194, 212–215, 282–285, and 310–312 contribute to the GTP site; these read GFPNVGKS, FTTLE, DIPG, NKMD, and SAA. Ser172 and Thr192 together coordinate Mg(2+). Residues 349–427 enclose the OCT domain; that stretch reads FTGKTEERFK…IGDLDFDFIE (79 aa).

The protein belongs to the TRAFAC class OBG-HflX-like GTPase superfamily. OBG GTPase family. As to quaternary structure, monomer. Mg(2+) is required as a cofactor.

It localises to the cytoplasm. In terms of biological role, an essential GTPase which binds GTP, GDP and possibly (p)ppGpp with moderate affinity, with high nucleotide exchange rates and a fairly low GTP hydrolysis rate. Plays a role in control of the cell cycle, stress response, ribosome biogenesis and in those bacteria that undergo differentiation, in morphogenesis control. The protein is GTPase Obg of Heliobacterium modesticaldum (strain ATCC 51547 / Ice1).